Consider the following 362-residue polypeptide: MASPIEVRLQMAYPDFTVRTDLSLPGSGITALFGPSGSGKTTCLRCIAGLEKADQSFIRVHDEVWQDTEKGIFLAPYKRAIGYVFQEASLFAHLSVRDNLEFGMKRIPRQQRRIQLPQASELLGIDHLLQRNPDKLSGGERQRVGIARALLTSPRLMLLDEPLAALDTRRKSEILPYLERLHRELDIPMLYVSHAQDEVARLADHLVLLDAGNVLASGPIHETLARLDLPLAMGSDAGVVIEGTVSAYDQHYQLLTVTLPDSKLSMRVAHAQMQVGTLLRIKVQARDVSLNLQPDYQSSILNRLPVTVIEEALADNSAHVLVKLDAGGTPLLARITRYSSDQLNLHRGQSLWAQIKAVAVLA.

The region spanning 2–236 (ASPIEVRLQM…LDLPLAMGSD (235 aa)) is the ABC transporter domain. 34–41 (GPSGSGKT) lines the ATP pocket. The 66-residue stretch at 297–362 (QSSILNRLPV…AQIKAVAVLA (66 aa)) folds into the Mop domain.

Belongs to the ABC transporter superfamily. Molybdate importer (TC 3.A.1.8) family. The complex is composed of two ATP-binding proteins (ModC), two transmembrane proteins (ModB) and a solute-binding protein (ModA).

It localises to the cell inner membrane. It catalyses the reaction molybdate(out) + ATP + H2O = molybdate(in) + ADP + phosphate + H(+). Its function is as follows. Part of the ABC transporter complex ModABC involved in molybdenum import. Responsible for energy coupling to the transport system. The chain is Molybdenum import ATP-binding protein ModC from Pseudomonas syringae pv. syringae (strain B728a).